Here is a 618-residue protein sequence, read N- to C-terminus: MADEGKSYNEHDDRVSFPQRRKKGRGPFRWKCGVGNRRSGRGGSGIRSSRFEEDDGDVAMNDPQDGPRVRFNPYTTRPNRRRDTWHDRDRIHVTVRRDRAPQERGGAGTSQDGTTKNWFKITIPYGKKYDKMWLLSMIQSKCSVPFNPIEFHYENTRAHFFVENATTASALKAVNYKIQDRENGRISIIINSSAPPYIVQNELKPEQVEQLKLIMSKRYDGSQQALDLKGLRSDPDLVAQNIDVVLNRRGCMAAALRIIEENIPELLSLNLSNNRLYKLDDMSSIVQKAPNLKILNLSGNELKSEWELDKIKGLKLEELWLDRNPMCDTFLDQSTYISTIRERFPKLLRLDGHELPPPIAFDVEAPTMLPPCKGSYFGTENLKSLVLHFLQQYYAIYDSGDRQGLLDAYHDGACCSLSTPSNPQNPVRHNLAKYFNDSRNVKKIKDTTTRFRLLKHTRLNVVAFLNELPKTHHDVNSFVVDISAQTSTLLCFSVNGVFKEVDGKSRDSLRAFTRTFIAVPASNSGLCIVNDELFVRNASPEEIQRAFAMPAPTPSSSPVPTLSQEQQDMLQAFSTQSGMNLEWSQKCLQDNNWDYTRSAQAFTHLKAKGEIPEVAFMK.

Residues 1–15 (MADEGKSYNEHDDRV) are compositionally biased toward basic and acidic residues. Residues 1 to 113 (MADEGKSYNE…RGGAGTSQDG (113 aa)) are disordered. A2 is subject to N-acetylalanine. The minor non-specific RNA-binding stretch occupies residues 2 to 59 (ADEGKSYNEHDDRVSFPQRRKKGRGPFRWKCGVGNRRSGRGGSGIRSSRFEEDDGDVA). The RNA-binding (RBD) stretch occupies residues 2–117 (ADEGKSYNEH…GTSQDGTTKN (116 aa)). An interaction with ALYREF/THOC4 and LUZP4 region spans residues 2-197 (ADEGKSYNEH…IIINSSAPPY (196 aa)). Residues 19 to 28 (QRRKKGRGPF) show a composition bias toward basic residues. Position 41 is an asymmetric dimethylarginine; alternate (R41). R41 is modified (omega-N-methylarginine; alternate). The major non-specific RNA-binding stretch occupies residues 60–117 (MNDPQDGPRVRFNPYTTRPNRRRDTWHDRDRIHVTVRRDRAPQERGGAGTSQDGTTKN). An RNA binding region spans residues 60 to 117 (MNDPQDGPRVRFNPYTTRPNRRRDTWHDRDRIHVTVRRDRAPQERGGAGTSQDGTTKN). The Nuclear localization signal signature appears at 66–99 (GPRVRFNPYTTRPNRRRDTWHDRDRIHVTVRRDR). Basic and acidic residues predominate over residues 81 to 102 (RRDTWHDRDRIHVTVRRDRAPQ). Positions 82 to 109 (RDTWHDRDRIHVTVRRDRAPQERGGAGT) match the Nuclear export signal motif. In terms of domain architecture, RRM spans 118–197 (WFKITIPYGK…IIINSSAPPY (80 aa)). The residue at position 125 (Y125) is a 3'-nitrotyrosine. LRR repeat units follow at residues 265–290 (ELLSLNLSNNRLYKLDDMSSIVQKAP), 291–314 (NLKILNLSGNELKSEWELDKIKGL), 315–342 (KLEELWLDRNPMCDTFLDQSTYISTIRE), and 343–370 (RFPKLLRLDGHELPPPIAFDVEAPTMLP). Positions 385–535 (LVLHFLQQYY…LCIVNDELFV (151 aa)) constitute an NTF2 domain. Residues 564–618 (QEQQDMLQAFSTQSGMNLEWSQKCLQDNNWDYTRSAQAFTHLKAKGEIPEVAFMK) enclose the TAP-C domain.

Belongs to the NXF family. Heterodimer (via NTF2 domain) with NXT1. The formation of NXF1-NXT1 heterodimers is required for the NXF1-mediated nuclear mRNA export. Forms a complex with RANBP2/NUP358, NXT1 and RANGAP1. Associates with the exon junction complex (EJC). Associates with the transcription/export (TREX) complex. Found in a mRNA complex with UPF3A and UPF3B. Found in a post-splicing complex with RBM8A, UPF1, UPF2, UPF3A, UPF3B and RNPS1. Interacts (via N-terminus) with DHX9 (via N-terminus); this interaction is direct and negatively regulates NXF1-mediated nuclear export of constitutive transport element (CTE)-containing cellular mRNAs. Interacts with FYTTD1/UIF. Interacts with EIF4A3. Interacts with NUP42. Interacts with ALYREF/THOC4. Interacts with CHTOP. Interacts with FRG1 (via N-terminus). Interacts with LUZP4. Interacts with FMR1; the interaction occurs in a mRNA-dependent and polyribosomes-independent manner in the nucleus. Interacts with CPSF6 (via N-terminus); this interaction is direct. Interacts with RBM15. Interacts with RBM15B. Interacts with MCM3AP; this interaction is not mediated by RNA. Interacts with DDX3X (via C-terminus); this interaction may be partly involved in DDX3X nuclear export and in NXF1 localization to stress granules. Interacts with PABPC1/PABP1.

Its subcellular location is the nucleus. It localises to the nucleoplasm. It is found in the nucleus speckle. The protein resides in the nuclear pore complex. The protein localises to the nucleus envelope. Its subcellular location is the cytoplasm. It localises to the stress granule. Involved in the nuclear export of mRNA species bearing retroviral constitutive transport elements (CTE) and in the export of mRNA from the nucleus to the cytoplasm (TAP/NFX1 pathway). The NXF1-NXT1 heterodimer is involved in the export of HSP70 mRNA in conjunction with ALYREF/THOC4 and THOC5 components of the TREX complex. ALYREF/THOC4-bound mRNA is thought to be transferred to the NXF1-NXT1 heterodimer for export. Also involved in nuclear export of m6A-containing mRNAs: interaction between SRSF3 and YTHDC1 facilitates m6A-containing mRNA-binding to both SRSF3 and NXF1, promoting mRNA nuclear export. The sequence is that of Nuclear RNA export factor 1 (Nxf1) from Rattus norvegicus (Rat).